We begin with the raw amino-acid sequence, 369 residues long: Probable trehalose-phosphate phosphatase D (369 aa).

The tract at residues 63–85 (RASSPTRTRPGNISPLPESDEED) is disordered.

Belongs to the trehalose phosphatase family. The cofactor is a divalent metal cation.

The enzyme catalyses alpha,alpha-trehalose 6-phosphate + H2O = alpha,alpha-trehalose + phosphate. The protein operates within glycan biosynthesis; trehalose biosynthesis. In terms of biological role, removes the phosphate from trehalose 6-phosphate to produce free trehalose. Trehalose accumulation in plant may improve abiotic stress tolerance. The chain is Probable trehalose-phosphate phosphatase D (TPPD) from Arabidopsis thaliana (Mouse-ear cress).